We begin with the raw amino-acid sequence, 424 residues long: Deoxyguanosinetriphosphate triphosphohydrolase-like protein (424 aa).

Residues 1–24 (MYPYSDADAFRRHPERAKSSQLRT) are disordered. The span at 8–18 (DAFRRHPERAK) shows a compositional bias: basic and acidic residues. The region spanning 67–217 (RLTHSLEVAQ…MDFSDDIAYS (151 aa)) is the HD domain.

Belongs to the dGTPase family. Type 2 subfamily.

The chain is Deoxyguanosinetriphosphate triphosphohydrolase-like protein from Corynebacterium glutamicum (strain R).